The sequence spans 71 residues: UPF0346 protein Bcer98_1690 (71 aa).

This sequence belongs to the UPF0346 family.

This Bacillus cytotoxicus (strain DSM 22905 / CIP 110041 / 391-98 / NVH 391-98) protein is UPF0346 protein Bcer98_1690.